The following is a 311-amino-acid chain: MKKKIGLLVMAYGTPYKEEDIERYYTHIRRGRKPSPEMLEDLTERYRAIGGISPLATITLEQAKKLEKRLNEVQDEVEYHMYLGLKHIEPFIEDAVKDMHNDGIQDAIALVLAPHYSTFSVKSYVGRAQEEAEKLGNLTIHGIDSWYKEPKFIQYWVDAVKGIYNGMSDAEREKAVLIVSAHSLPEKIIAMGDPYPDQLNETADYIARGAEVANYAVGWQSAGNTPDPWIGPDVQDLTRELNEKHGYTSFVYAPVGFVAEHLEVLYDNDFECKVVTDEIGAKYYRPEMPNASDAFIDCLTDVVLKKKESVL.

Residues Tyr-12, Arg-29, 45–46 (RY), Ser-53, and Tyr-124 each bind Fe-coproporphyrin III. The Fe(2+) site is built by His-182 and Glu-263.

Belongs to the ferrochelatase family.

It localises to the cytoplasm. The enzyme catalyses Fe-coproporphyrin III + 2 H(+) = coproporphyrin III + Fe(2+). It functions in the pathway porphyrin-containing compound metabolism; protoheme biosynthesis. In terms of biological role, involved in coproporphyrin-dependent heme b biosynthesis. Catalyzes the insertion of ferrous iron into coproporphyrin III to form Fe-coproporphyrin III. This is Coproporphyrin III ferrochelatase 1 from Bacillus cereus (strain ATCC 14579 / DSM 31 / CCUG 7414 / JCM 2152 / NBRC 15305 / NCIMB 9373 / NCTC 2599 / NRRL B-3711).